A 396-amino-acid chain; its full sequence is MSTKDFIEKDYYKVLGVPKDATEAEIKKAYRKLAREFHPDANKGNAKAEERFKEISEANDILGDTKKRKEYDEARTLFGNGGFRPGPGAQGGSFNFDLGDLFGGGAQQGGGAGGGFGGGIGDVFGGLFNRGGAGPGTGTRTQPRRGQDIESEVTLSFTEAVDGATVPLRMSSQAPCKACSGTGDANGTPRVCPTCVGTGQVARGSGGGFSLTDPCPDCKGRGLIAENPCEICKGSGRAKSSRTMQVRIPAGVSDSQRIRLRGKGAPGERGGPAGDLYVVVHVDAHPVFGRKGDNLTVTVPVTFAEAALGGEVKVPTLGGPAVTLKLPPGTPNGRTMRARGKGAVRKDGTRGDLLVTVEVTVPKDVSGKARDALEAYREATAGEDPRAELFQAAKGA.

Positions Asp10–Arg75 constitute a J domain. Residues Leu127 to Thr137 are compositionally biased toward gly residues. Positions Leu127–Ile149 are disordered. A CR-type zinc finger spans residues Gly163 to Ser241. Positions 176, 179, 192, 195, 215, 218, 229, and 232 each coordinate Zn(2+). CXXCXGXG motif repeat units follow at residues Cys176 to Gly183, Cys192 to Gly199, Cys215 to Gly222, and Cys229 to Gly236.

The protein belongs to the DnaJ family. As to quaternary structure, homodimer. Requires Zn(2+) as cofactor.

The protein localises to the cytoplasm. In terms of biological role, participates actively in the response to hyperosmotic and heat shock by preventing the aggregation of stress-denatured proteins and by disaggregating proteins, also in an autonomous, DnaK-independent fashion. Unfolded proteins bind initially to DnaJ; upon interaction with the DnaJ-bound protein, DnaK hydrolyzes its bound ATP, resulting in the formation of a stable complex. GrpE releases ADP from DnaK; ATP binding to DnaK triggers the release of the substrate protein, thus completing the reaction cycle. Several rounds of ATP-dependent interactions between DnaJ, DnaK and GrpE are required for fully efficient folding. Also involved, together with DnaK and GrpE, in the DNA replication of plasmids through activation of initiation proteins. This is Chaperone protein DnaJ 1 from Streptomyces avermitilis (strain ATCC 31267 / DSM 46492 / JCM 5070 / NBRC 14893 / NCIMB 12804 / NRRL 8165 / MA-4680).